Here is a 259-residue protein sequence, read N- to C-terminus: Truncated Ankyrin repeat protein OPG003 (259 aa).

This sequence belongs to the orthopoxvirus OPG003 family.

The sequence is that of Truncated Ankyrin repeat protein OPG003 (OPG003) from Vaccinia virus (strain Copenhagen) (VACV).